A 188-amino-acid chain; its full sequence is Putative protein SSX6 (188 aa).

Disordered stretches follow at residues 1 to 22 (MNGD…EKRS) and 74 to 188 (KRAT…EDDK). The KRAB-related domain maps to 20 to 83 (KRSKAFDDIA…KRATDSQRND (64 aa)). 2 stretches are compositionally biased toward basic and acidic residues: residues 75–96 (RATD…EVER) and 112–122 (MPEKPAEEGSD). Ser-123 is modified (phosphoserine). Residues 147–156 (SSEKIHERSG) are compositionally biased toward basic and acidic residues. The segment covering 157-170 (PKRGKHAWTHRLRE) has biased composition (basic residues). Over residues 179–188 (EISDPEEDDK) the composition is skewed to acidic residues.

It belongs to the SSX family. Not detected in any normal tissues. Expressed in a melanoma cell line.

Functionally, could act as a modulator of transcription. The sequence is that of Putative protein SSX6 from Homo sapiens (Human).